Consider the following 460-residue polypeptide: Proton extrusion protein PxcA (460 aa).

Disordered regions lie at residues 82 to 128 (FSRL…QRRD) and 143 to 190 (SRYK…GSGN). Residues 90–102 (QNGSGPTSAQDKA) show a composition bias toward polar residues. Low complexity predominate over residues 107–120 (AAEANVSESSSENS). Residues 151-163 (KSQPISASISTSP) are compositionally biased toward polar residues. A compositionally biased stretch (low complexity) spans 171 to 184 (QPTSTQPSSSNVSV). A run of 4 helical transmembrane segments spans residues 242-262 (FLLL…NFLF), 337-357 (GLKN…LIFV), 373-393 (IYGL…DVFV), and 420-440 (FIYG…KYWI).

Belongs to the CemA family.

The protein localises to the cell inner membrane. Its function is as follows. Required for H(+) efflux immediately after light irradiation to form a rapid H(+) concentration gradient across the thylakoid membranes. Together with PxcL, contributes to transient H(+) uptake following dark to light transition. The chain is Proton extrusion protein PxcA from Synechococcus sp. (strain JA-2-3B'a(2-13)) (Cyanobacteria bacterium Yellowstone B-Prime).